The primary structure comprises 361 residues: tRNA-specific 2-thiouridylase MnmA (361 aa).

Residues 6–13 (AMSGGVDS) and Leu32 contribute to the ATP site. Cys99 serves as the catalytic Nucleophile. Cysteines 99 and 196 form a disulfide. Gly123 serves as a coordination point for ATP. Residues 145-147 (RDQ) form an interaction with tRNA region. The Cysteine persulfide intermediate role is filled by Cys196.

The protein belongs to the MnmA/TRMU family.

It is found in the cytoplasm. The catalysed reaction is S-sulfanyl-L-cysteinyl-[protein] + uridine(34) in tRNA + AH2 + ATP = 2-thiouridine(34) in tRNA + L-cysteinyl-[protein] + A + AMP + diphosphate + H(+). Its function is as follows. Catalyzes the 2-thiolation of uridine at the wobble position (U34) of tRNA, leading to the formation of s(2)U34. This is tRNA-specific 2-thiouridylase MnmA from Gluconobacter oxydans (strain 621H) (Gluconobacter suboxydans).